The chain runs to 133 residues: Small ribosomal subunit protein uS8 (133 aa).

It belongs to the universal ribosomal protein uS8 family. In terms of assembly, part of the 30S ribosomal subunit. Contacts proteins S5 and S12.

One of the primary rRNA binding proteins, it binds directly to 16S rRNA central domain where it helps coordinate assembly of the platform of the 30S subunit. The polypeptide is Small ribosomal subunit protein uS8 (Endomicrobium trichonymphae).